We begin with the raw amino-acid sequence, 176 residues long: Ribosome maturation factor RimM (176 aa).

The region spanning 99–173 is the PRC barrel domain; that stretch reads KEGEFHLVDL…WLLIKPPPGL (75 aa).

This sequence belongs to the RimM family. Binds ribosomal protein uS19.

It localises to the cytoplasm. Its function is as follows. An accessory protein needed during the final step in the assembly of 30S ribosomal subunit, possibly for assembly of the head region. Essential for efficient processing of 16S rRNA. May be needed both before and after RbfA during the maturation of 16S rRNA. It has affinity for free ribosomal 30S subunits but not for 70S ribosomes. The chain is Ribosome maturation factor RimM from Prochlorococcus marinus (strain MIT 9211).